Consider the following 200-residue polypeptide: Probable molybdenum cofactor guanylyltransferase (200 aa).

GTP contacts are provided by residues 9 to 11, lysine 21, aspartate 69, and aspartate 100; that span reads LAG. Aspartate 100 provides a ligand contact to Mg(2+).

This sequence belongs to the MobA family. Mg(2+) is required as a cofactor.

The protein localises to the cytoplasm. It carries out the reaction Mo-molybdopterin + GTP + H(+) = Mo-molybdopterin guanine dinucleotide + diphosphate. In terms of biological role, transfers a GMP moiety from GTP to Mo-molybdopterin (Mo-MPT) cofactor (Moco or molybdenum cofactor) to form Mo-molybdopterin guanine dinucleotide (Mo-MGD) cofactor. This chain is Probable molybdenum cofactor guanylyltransferase, found in Bacillus cereus (strain B4264).